A 243-amino-acid polypeptide reads, in one-letter code: Geranylgeranylglyceryl phosphate synthase (243 aa).

Residues aspartate 22 and serine 51 each contribute to the Mg(2+) site. Residues 169-175, 200-201, and 222-223 each bind sn-glycerol 1-phosphate; these read YLEAGSG, GG, and GT.

Belongs to the GGGP/HepGP synthase family. Group II subfamily. It depends on Mg(2+) as a cofactor.

It is found in the cytoplasm. The catalysed reaction is sn-glycerol 1-phosphate + (2E,6E,10E)-geranylgeranyl diphosphate = sn-3-O-(geranylgeranyl)glycerol 1-phosphate + diphosphate. Its pathway is membrane lipid metabolism; glycerophospholipid metabolism. Prenyltransferase that catalyzes the transfer of the geranylgeranyl moiety of geranylgeranyl diphosphate (GGPP) to the C3 hydroxyl of sn-glycerol-1-phosphate (G1P). This reaction is the first ether-bond-formation step in the biosynthesis of archaeal membrane lipids. In Methanosphaera stadtmanae (strain ATCC 43021 / DSM 3091 / JCM 11832 / MCB-3), this protein is Geranylgeranylglyceryl phosphate synthase.